The primary structure comprises 515 residues: MSDKVIIFDTTLRDGEQSPGASMTKDEKVRIARQLERLKVDVIEAGFAASSEGDFQAISAVAAAVKDSIVCSLARANDKDITRAADALQAANAKRIHAFLATSPLHMAVKLRMSPEEVLEQAKRSIRFARNLASDIEFSAEDGYRSEMDFLCRVVEAVINEGASTINIPDTVGYATPELYGDFIKTLRTRVPNSDKAVWSVHCHNDLGMAVANSLAGVKIGGARQIECTINGLGERAGNTALEEIVMALRTRKDYFDMVCGIDASQIVPASKLVSQITGFVVQPNKAVVGANAFAHTSGIHQDGILKNRDTYEIMRAEDVGWSANKIVLGKLSGRNAFKQRLQELGITVEAEADLNEAFTRFKALADQKSEIFDEDIIAIMSDSAAAEEGEHYHFISLSQHSETGERPKSRVIFRMGDKEVSSEAEGNGPVDASLNAIEEIAKSGAEQLLYSVNAITSGTQSQGEVTVRLSKGGRIVNGVGTDPDIIAASAKAYLSALNKLHDPSQAKLNAQMAP.

A Pyruvate carboxyltransferase domain is found at 5-268; that stretch reads VIIFDTTLRD…VCGIDASQIV (264 aa). The Mn(2+) site is built by D14, H202, H204, and N239. The regulatory domain stretch occupies residues 394 to 515; it reads HFISLSQHSE…QAKLNAQMAP (122 aa).

This sequence belongs to the alpha-IPM synthase/homocitrate synthase family. LeuA type 1 subfamily. As to quaternary structure, homodimer. Mn(2+) is required as a cofactor.

The protein localises to the cytoplasm. The catalysed reaction is 3-methyl-2-oxobutanoate + acetyl-CoA + H2O = (2S)-2-isopropylmalate + CoA + H(+). It participates in amino-acid biosynthesis; L-leucine biosynthesis; L-leucine from 3-methyl-2-oxobutanoate: step 1/4. Its function is as follows. Catalyzes the condensation of the acetyl group of acetyl-CoA with 3-methyl-2-oxobutanoate (2-ketoisovalerate) to form 3-carboxy-3-hydroxy-4-methylpentanoate (2-isopropylmalate). This is 2-isopropylmalate synthase from Polynucleobacter asymbioticus (strain DSM 18221 / CIP 109841 / QLW-P1DMWA-1) (Polynucleobacter necessarius subsp. asymbioticus).